Consider the following 493-residue polypeptide: Galactose-1-phosphate uridylyltransferase (493 aa).

This sequence belongs to the galactose-1-phosphate uridylyltransferase type 2 family.

It localises to the cytoplasm. The catalysed reaction is alpha-D-galactose 1-phosphate + UDP-alpha-D-glucose = alpha-D-glucose 1-phosphate + UDP-alpha-D-galactose. It participates in carbohydrate metabolism; galactose metabolism. The protein is Galactose-1-phosphate uridylyltransferase of Streptococcus thermophilus (strain ATCC BAA-250 / LMG 18311).